Reading from the N-terminus, the 256-residue chain is Acetylglutamate kinase (256 aa).

Substrate-binding positions include 40–41 (GG), Arg-62, and Asn-153.

It belongs to the acetylglutamate kinase family. ArgB subfamily.

Its subcellular location is the cytoplasm. The enzyme catalyses N-acetyl-L-glutamate + ATP = N-acetyl-L-glutamyl 5-phosphate + ADP. It functions in the pathway amino-acid biosynthesis; L-arginine biosynthesis; N(2)-acetyl-L-ornithine from L-glutamate: step 2/4. Functionally, catalyzes the ATP-dependent phosphorylation of N-acetyl-L-glutamate. The polypeptide is Acetylglutamate kinase (Bacillus cytotoxicus (strain DSM 22905 / CIP 110041 / 391-98 / NVH 391-98)).